Here is a 310-residue protein sequence, read N- to C-terminus: ADP-L-glycero-D-manno-heptose-6-epimerase (310 aa).

NADP(+)-binding positions include 10–11, 31–32, Lys38, Lys53, 75–79, and Asn92; these read FI, DN, and EGACS. Tyr140 (proton acceptor) is an active-site residue. Lys144 is a binding site for NADP(+). Position 169 (Asn169) interacts with substrate. Val170 and Lys178 together coordinate NADP(+). Lys178 serves as the catalytic Proton acceptor. Residues Ser180, His187, 201-204, Arg209, and Tyr272 each bind substrate; that span reads FSGS.

This sequence belongs to the NAD(P)-dependent epimerase/dehydratase family. HldD subfamily. Homopentamer. NADP(+) is required as a cofactor.

The enzyme catalyses ADP-D-glycero-beta-D-manno-heptose = ADP-L-glycero-beta-D-manno-heptose. Its pathway is nucleotide-sugar biosynthesis; ADP-L-glycero-beta-D-manno-heptose biosynthesis; ADP-L-glycero-beta-D-manno-heptose from D-glycero-beta-D-manno-heptose 7-phosphate: step 4/4. Functionally, catalyzes the interconversion between ADP-D-glycero-beta-D-manno-heptose and ADP-L-glycero-beta-D-manno-heptose via an epimerization at carbon 6 of the heptose. This is ADP-L-glycero-D-manno-heptose-6-epimerase from Pectobacterium carotovorum subsp. carotovorum (strain PC1).